The primary structure comprises 437 residues: Glutamate-1-semialdehyde 2,1-aminomutase (437 aa).

N6-(pyridoxal phosphate)lysine is present on lysine 273.

Belongs to the class-III pyridoxal-phosphate-dependent aminotransferase family. HemL subfamily. As to quaternary structure, homodimer. Pyridoxal 5'-phosphate serves as cofactor.

Its subcellular location is the cytoplasm. The catalysed reaction is (S)-4-amino-5-oxopentanoate = 5-aminolevulinate. It functions in the pathway porphyrin-containing compound metabolism; protoporphyrin-IX biosynthesis; 5-aminolevulinate from L-glutamyl-tRNA(Glu): step 2/2. In Chlamydia abortus (strain DSM 27085 / S26/3) (Chlamydophila abortus), this protein is Glutamate-1-semialdehyde 2,1-aminomutase.